The following is a 558-amino-acid chain: 2-isopropylmalate synthase (558 aa).

The Pyruvate carboxyltransferase domain occupies 30-303 (PIWCSVDLRD…DPGIDCSDIN (274 aa)). D39, H242, H244, and N278 together coordinate Mg(2+). Positions 437–558 (QPGARLKFLD…ANRIVGRKAR (122 aa)) are regulatory domain.

It belongs to the alpha-IPM synthase/homocitrate synthase family. LeuA type 2 subfamily. In terms of assembly, homodimer. Mg(2+) serves as cofactor.

It localises to the cytoplasm. The catalysed reaction is 3-methyl-2-oxobutanoate + acetyl-CoA + H2O = (2S)-2-isopropylmalate + CoA + H(+). Its pathway is amino-acid biosynthesis; L-leucine biosynthesis; L-leucine from 3-methyl-2-oxobutanoate: step 1/4. Catalyzes the condensation of the acetyl group of acetyl-CoA with 3-methyl-2-oxobutanoate (2-ketoisovalerate) to form 3-carboxy-3-hydroxy-4-methylpentanoate (2-isopropylmalate). The sequence is that of 2-isopropylmalate synthase from Mesorhizobium japonicum (strain LMG 29417 / CECT 9101 / MAFF 303099) (Mesorhizobium loti (strain MAFF 303099)).